A 718-amino-acid chain; its full sequence is Exostosin-2 (718 aa).

Over 1 to 25 the chain is Cytoplasmic; it reads MCASVKYNIRGPALIPRMKTKHRIY. Residues 26-46 traverse the membrane as a helical; Signal-anchor for type II membrane protein segment; sequence YITLFSIVLLGLIATGMFQFW. Topologically, residues 47-718 are lumenal; that stretch reads PHSIESSGDW…LKSFPNIGSL (672 aa). 4 disulfide bridges follow: C85–C90, C96–C151, C286–C300, and C318–C339. N288 is a glycosylation site (N-linked (GlcNAc...) asparagine). Positions 461, 465, 490, and 517 each coordinate UDP. Positions 465, 490, 517, 522, 538, 539, and 540 each coordinate UDP-N-acetyl-alpha-D-glucosamine. Residues D538 and D539 each coordinate UDP. D540 is a Mn(2+) binding site. Positions 582 and 584 each coordinate a protein. A disulfide bridge links C626 with C676. UDP-N-acetyl-alpha-D-glucosamine-binding residues include E627 and D628. An N-linked (GlcNAc...) asparagine glycan is attached at N637. Residues K651 and K653 each coordinate a protein. R673 provides a ligand contact to UDP-N-acetyl-alpha-D-glucosamine.

This sequence belongs to the glycosyltransferase 47 family. As to quaternary structure, part of the heparan sulfate polymerase, a dimeric complex composed of EXT1 and EXT2. Could also form homooligomeric complexes. Interacts with NDST1. Interacts with GALNT5. The cofactor is Mn(2+). In terms of processing, a soluble form is generated by proteolytic processing. N-glycosylated at Asn-637.

It localises to the golgi apparatus membrane. It is found in the golgi apparatus. Its subcellular location is the cis-Golgi network membrane. The protein localises to the endoplasmic reticulum membrane. The protein resides in the secreted. The enzyme catalyses 3-O-{[(1-&gt;4)-beta-D-GlcA-(1-&gt;4)-alpha-D-GlcNAc](n)-(1-&gt;4)-beta-D-GlcA-(1-&gt;3)-beta-D-Gal-(1-&gt;3)-beta-D-Gal-(1-&gt;4)-beta-D-Xyl}-L-seryl-[protein] + UDP-N-acetyl-alpha-D-glucosamine = 3-O-{alpha-D-GlcNAc-[(1-&gt;4)-beta-D-GlcA-(1-&gt;4)-alpha-D-GlcNAc](n)-(1-&gt;4)-beta-D-GlcA-(1-&gt;3)-beta-D-Gal-(1-&gt;3)-beta-D-Gal-(1-&gt;4)-beta-D-Xyl}-L-seryl-[protein] + UDP + H(+). The protein operates within protein modification; protein glycosylation. Its function is as follows. Glycosyltransferase forming with EXT1 the heterodimeric heparan sulfate polymerase which catalyzes the elongation of the heparan sulfate glycan backbone. Glycan backbone extension consists in the alternating transfer of (1-&gt;4)-beta-D-GlcA and (1-&gt;4)-alpha-D-GlcNAc residues from their respective UDP-sugar donors. Both EXT1 and EXT2 are required for the full activity of the polymerase since EXT1 bears the N-acetylglucosaminyl-proteoglycan 4-beta-glucuronosyltransferase activity within the complex while EXT2 carries the glucuronosyl-N-acetylglucosaminyl-proteoglycan 4-alpha-N-acetylglucosaminyltransferase activity. Heparan sulfate proteoglycans are ubiquitous components of the extracellular matrix and play an important role in tissue homeostasis and signaling. This is Exostosin-2 from Bos taurus (Bovine).